We begin with the raw amino-acid sequence, 109 residues long: ATP-dependent Clp protease adapter protein ClpS (109 aa).

A disordered region spans residues 1 to 20; that stretch reads MAERKQGGQGNGVGSSVVTE.

Belongs to the ClpS family. Binds to the N-terminal domain of the chaperone ClpA.

Functionally, involved in the modulation of the specificity of the ClpAP-mediated ATP-dependent protein degradation. The sequence is that of ATP-dependent Clp protease adapter protein ClpS from Caulobacter vibrioides (strain NA1000 / CB15N) (Caulobacter crescentus).